The primary structure comprises 455 residues: Kynureninase (455 aa).

Residues Leu-94, Thr-95, 122-125, Asp-208, His-211, and Tyr-233 contribute to the pyridoxal 5'-phosphate site; that span reads FPSD. Residue Lys-234 is modified to N6-(pyridoxal phosphate)lysine. 2 residues coordinate pyridoxal 5'-phosphate: Trp-275 and Asn-303.

This sequence belongs to the kynureninase family. Homodimer. The cofactor is pyridoxal 5'-phosphate.

The protein resides in the cytoplasm. It carries out the reaction L-kynurenine + H2O = anthranilate + L-alanine + H(+). It catalyses the reaction 3-hydroxy-L-kynurenine + H2O = 3-hydroxyanthranilate + L-alanine + H(+). The protein operates within amino-acid degradation; L-kynurenine degradation; L-alanine and anthranilate from L-kynurenine: step 1/1. It participates in cofactor biosynthesis; NAD(+) biosynthesis; quinolinate from L-kynurenine: step 2/3. Catalyzes the cleavage of L-kynurenine (L-Kyn) and L-3-hydroxykynurenine (L-3OHKyn) into anthranilic acid (AA) and 3-hydroxyanthranilic acid (3-OHAA), respectively. The sequence is that of Kynureninase from Vanderwaltozyma polyspora (strain ATCC 22028 / DSM 70294 / BCRC 21397 / CBS 2163 / NBRC 10782 / NRRL Y-8283 / UCD 57-17) (Kluyveromyces polysporus).